The following is a 155-amino-acid chain: Ribosome-binding factor A (155 aa).

Composition is skewed to basic and acidic residues over residues 116–125 (ARQRDQEVAR) and 142–155 (SPHEGRPESEADGW). The tract at residues 116 to 155 (ARQRDQEVARQAEGATPAGDANPYKTSPHEGRPESEADGW) is disordered.

It belongs to the RbfA family. As to quaternary structure, monomer. Binds 30S ribosomal subunits, but not 50S ribosomal subunits or 70S ribosomes.

It localises to the cytoplasm. Functionally, one of several proteins that assist in the late maturation steps of the functional core of the 30S ribosomal subunit. Associates with free 30S ribosomal subunits (but not with 30S subunits that are part of 70S ribosomes or polysomes). Required for efficient processing of 16S rRNA. May interact with the 5'-terminal helix region of 16S rRNA. This is Ribosome-binding factor A from Corynebacterium kroppenstedtii (strain DSM 44385 / JCM 11950 / CIP 105744 / CCUG 35717).